The following is a 519-amino-acid chain: Halolysin (519 aa).

The segment at residues methionine 1–valine 27 is a signal peptide (tat-type signal). Residues threonine 28–leucine 116 constitute a propeptide that is removed on maturation. Residues glutamine 127–valine 400 enclose the Peptidase S8 domain. Residues aspartate 154, histidine 193, and serine 347 each act as charge relay system in the active site. The interval serine 386–serine 425 is disordered. A compositionally biased stretch (gly residues) spans glycine 405 to serine 415.

The protein belongs to the peptidase S8 family. In terms of processing, predicted to be exported by the Tat system. The position of the signal peptide cleavage has not been experimentally proven.

The protein resides in the secreted. Probable secreted halophilic serine protease showing proteolytic activity toward the protease general substrate azocasein. The polypeptide is Halolysin (hly) (Haloferax mediterranei (strain ATCC 33500 / DSM 1411 / JCM 8866 / NBRC 14739 / NCIMB 2177 / R-4) (Halobacterium mediterranei)).